Consider the following 177-residue polypeptide: Antigen TpF1 (177 aa).

Belongs to the Dps family. As to quaternary structure, homodecamer; either linked or stabilized by disulfide bonds.

May play an important structural role in the outer membrane. The polypeptide is Antigen TpF1 (tpf1) (Treponema pallidum (strain Nichols)).